A 478-amino-acid chain; its full sequence is Putative L-amino-acid oxidase YobN (478 aa).

FAD-binding positions include serine 34, glutamate 53, arginine 61, and 80 to 81; that span reads MR. Substrate-binding residues include arginine 81 and tyrosine 369. FAD contacts are provided by residues glutamate 451 and 460 to 463; that span reads MQGA.

Belongs to the flavin monoamine oxidase family. FIG1 subfamily. Requires FAD as cofactor.

It carries out the reaction an L-alpha-amino acid + O2 + H2O = a 2-oxocarboxylate + H2O2 + NH4(+). In Bacillus subtilis (strain 168), this protein is Putative L-amino-acid oxidase YobN (yobN).